The chain runs to 872 residues: uncharacterized protein (872 aa).

Residues 496–524 adopt a coiled-coil conformation; the sequence is LQQHHQDISAMQQQILEEKNQLRRATIDV. Disordered stretches follow at residues 595–736 and 844–872; these read RPAV…SVQQ and TKEN…PQAV. Composition is skewed to polar residues over residues 615 to 659 and 670 to 686; these read QNGN…QTTF and PYAS…NNVV. The segment covering 687–736 has biased composition (low complexity); sequence QQYQSYYDNPSNQQSNQQSNQQSNQQPNQQPNQQPNQQPNQQPNQQSVQQ.

The protein localises to the virion. This is an uncharacterized protein from Acanthamoeba polyphaga mimivirus (APMV).